Reading from the N-terminus, the 755-residue chain is Polycomb protein SUZ12 (755 aa).

3 disordered regions span residues 26-79 (KMGN…RRIS), 333-377 (NANG…SRRA), and 392-420 (AVGR…SDDR). The segment covering 30-42 (KASSQAQKRSQSQ) has biased composition (low complexity). Composition is skewed to polar residues over residues 43 to 57 (TGDS…DGSG) and 349 to 359 (TQPNGTHNEGT). The segment covering 411 to 420 (GEDHPPSDDR) has biased composition (basic and acidic residues). A C2H2-type zinc finger spans residues 436–458 (FACLICGAENERLSQLRAHYMCH). The segment at 580 to 645 (IDDSWLLLKH…KADWLVSKRS (66 aa)) is polycomb protein VEFS-Box.

Belongs to the VEFS (VRN2-EMF2-FIS2-SU(Z)12) family. In terms of assembly, component of the polycomb repressive complex 2 (PRC2) that consists of four core subunits icluding EZH2, EED, SUZ12, and RBBP4, among which EZH2 is the catalytic subunit and which minimally requires EED and SUZ12 for catalysis.

Its subcellular location is the nucleus. Its function is as follows. Component of the of the Polycomb Repressive Complex 2 (PRC2), a histone H3 lysine methyltransferase responsible for generating mono-, di-, and tri-methylation on Lys27 (H3K27me1, H3K27me2 and H3K27me3). The tri-methylated form is known to be critical in gene repression, and its proper placement is essential in defining repression patterns during development. SUZ12 is not a catalytic subunit but is required for the complex regulation of histone H3 lysine methylation by EZH2. The sequence is that of Polycomb protein SUZ12 from Chaetomium thermophilum (strain DSM 1495 / CBS 144.50 / IMI 039719) (Thermochaetoides thermophila).